The following is a 68-amino-acid chain: MNKKIKIPKDSKAINYKTTDLIREFISDRGKIIPQRITKSTRKKHKLIEKAIKQARLIGLMPFKQKNW.

This sequence belongs to the bacterial ribosomal protein bS18 family. Part of the 30S ribosomal subunit.

It is found in the plastid. The protein localises to the chloroplast. The sequence is that of Small ribosomal subunit protein bS18c (rps18) from Cyanidium caldarium (Red alga).